Consider the following 72-residue polypeptide: Protein kish-A (72 aa).

The first 26 residues, 1–26 (MSAIFNFQSLLTVILLLICTCAYIRS), serve as a signal peptide directing secretion. At 27-53 (LTPSLLDKNKTGFLGIFWKCARIGERK) the chain is on the extracellular side. A glycan (N-linked (GlcNAc...) asparagine) is linked at Asn35. Residues 54–71 (SPYVAFCCIVMALTILFS) form a helical membrane-spanning segment. Position 72 (Glu72) is a topological domain, cytoplasmic.

The protein belongs to the KISH family.

It localises to the golgi apparatus membrane. Involved in the early part of the secretory pathway. The polypeptide is Protein kish-A (tmem167a) (Danio rerio (Zebrafish)).